The following is a 414-amino-acid chain: 11-beta-hydroxysteroid dehydrogenase type 2 (414 aa).

4 helical membrane passes run 3–23 (DFAVSFWIYIGVMSIFVGGAV), 26–46 (FLAFNIGAMPSVVVWLGATLL), 52–72 (ALCMPAVLARLVLCVCCWLYF), and 341–361 (YYAGPGLILMYFICSYLPLSI). The tract at residues 382–414 (KQQGLSPNDNNNSIKENMNDSSSNNSNFTKCID) is disordered. Residues 384–397 (QGLSPNDNNNSIKE) show a composition bias toward polar residues.

This sequence belongs to the short-chain dehydrogenases/reductases (SDR) family. In terms of tissue distribution, broadly expressed in peripheral (brain, gill, eye, heart, liver, head kidney, posterior kidney, and gut).

Its subcellular location is the membrane. The catalysed reaction is an 11beta-hydroxysteroid + NAD(+) = an 11-oxosteroid + NADH + H(+). It carries out the reaction cortisol + NAD(+) = cortisone + NADH + H(+). The enzyme catalyses corticosterone + NAD(+) = 11-dehydrocorticosterone + NADH + H(+). It catalyses the reaction 11beta,17beta-dihydroxyandrost-4-ene-3-one + NAD(+) = 17beta-hydroxyandrost-4-ene-3,11-dione + NADH + H(+). The catalysed reaction is 11beta-hydroxyandrost-4-ene-3,17-dione + NAD(+) = androst-4-ene-3,11,17-trione + NADH + H(+). The protein operates within steroid metabolism. Its function is as follows. Catalyzes the conversion of biologically active 11beta-hydroxyglucocorticoids (11beta-hydroxysteroid) such as cortisol, to inactive 11-ketoglucocorticoids (11-oxosteroid) such as cortisone, in the presence of NAD(+). Cortisol is the primary glucocorticoid in teleosts and is released to increase glucose bioavailability in order to meet the increased energy demands in response to stress. Functions as a dehydrogenase (oxidase), thereby decreasing the concentration of active glucocorticoids, regulating the hypothalamus-pituitary-interrenal (HPI) axis function in adult fish. Decreasing the excess glucocorticoids may be of relevance to brain function and neural proliferation. Plays a key role by catalyzing the oxidation of 11beta-hydroxytestosterone (11beta,17beta-dihydroxyandrost-4-ene-3-one) to 11-ketotestosterone (17beta-hydroxyandrost-4-ene-3,11-dione), the major fish androgen, that activates androgen receptor transcriptional activity. Catalyzes the conversion of 11beta-hydroxyandrostenedione (11beta-hydroxyandrost-4-ene-3,17-dione) to 11-ketoandrostenedione (androst-4-ene-3,11,17-trione), which can be further metabolized to 11-ketotestosterone. Exerts a dual role in fish by inactivating glucocorticoids and activating androgens. This is 11-beta-hydroxysteroid dehydrogenase type 2 (hsd11b2) from Danio rerio (Zebrafish).